Reading from the N-terminus, the 301-residue chain is Light-independent protochlorophyllide reductase iron-sulfur ATP-binding protein (301 aa).

Residues 1–13 are compositionally biased toward low complexity; it reads MNVTLRPPLTTAP. A disordered region spans residues 1–21; the sequence is MNVTLRPPLTTAPRRPDGAGS. ATP-binding positions include 45–50 and lysine 74; that span reads GIGKST. Residue serine 49 participates in Mg(2+) binding. 2 residues coordinate [4Fe-4S] cluster: cysteine 130 and cysteine 164. Residues 215–216 and 239–241 each bind ATP; these read NR and PDL.

The protein belongs to the NifH/BchL/ChlL family. As to quaternary structure, homodimer. Protochlorophyllide reductase is composed of three subunits; BchL, BchN and BchB. It depends on [4Fe-4S] cluster as a cofactor.

The enzyme catalyses chlorophyllide a + oxidized 2[4Fe-4S]-[ferredoxin] + 2 ADP + 2 phosphate = protochlorophyllide a + reduced 2[4Fe-4S]-[ferredoxin] + 2 ATP + 2 H2O. It functions in the pathway porphyrin-containing compound metabolism; bacteriochlorophyll biosynthesis (light-independent). Its function is as follows. Component of the dark-operative protochlorophyllide reductase (DPOR) that uses Mg-ATP and reduced ferredoxin to reduce ring D of protochlorophyllide (Pchlide) to form chlorophyllide a (Chlide). This reaction is light-independent. The L component serves as a unique electron donor to the NB-component of the complex, and binds Mg-ATP. The protein is Light-independent protochlorophyllide reductase iron-sulfur ATP-binding protein of Bradyrhizobium sp. (strain BTAi1 / ATCC BAA-1182).